The primary structure comprises 1273 residues: ABC transporter B family member 2 (1273 aa).

Positions 1-30 are cleaved as a signal peptide; the sequence is MYISLIFFLSNHFPPLISIPIFIFLSFSSP. A run of 7 helical transmembrane segments spans residues 66–86, 91–111, 126–146, 209–229, 230–250, 305–325, and 345–365; these read FSFADFYDCVLMTLGSVGACI, VPIFFIFFGKLINIIGLAYLF, FVYLSVAILFSSWLEVACWMH, FIAGFAIGFTSVWQISLVTLS, IVPLIALAGGIYAFVAIGLIA, GLGLGSMHCVLFLSWALLVWF, and LNVVIAGLSLGQAAPDISAFV. The 290-residue stretch at 77 to 366 folds into the ABC transmembrane type-1 1 domain; that stretch reads MTLGSVGACI…AAPDISAFVR (290 aa). The ABC transporter 1 domain occupies 401-637; the sequence is IQFKDATFSY…PDGAYSSLLR (237 aa). 436-443 contacts ATP; the sequence is GGSGSGKS. N-linked (GlcNAc...) asparagine glycans are attached at residues Asn-466 and Asn-651. An ABC transmembrane type-1 2 domain is found at 710–997; the sequence is GVCGTICAFI…TLALAPDLLK (288 aa). 2 consecutive transmembrane segments (helical) span residues 711 to 731 and 752 to 772; these read VCGTICAFIAGSQMPLFALGV and IAILFCCASVITLIVYTIEHI. The N-linked (GlcNAc...) asparagine glycan is linked to Asn-806. 3 helical membrane passes run 832–852, 934–954, and 975–995; these read ILLQNLGLVVTSFIIAFILNW, IAGLFYGVSQFFIFSSYGLAL, and FMVLIVTALAMGETLALAPDL. The ABC transporter 2 domain occupies 1030–1266; sequence IELKGVHFSY…KSGPYFKLIS (237 aa). 1065–1072 contributes to the ATP binding site; that stretch reads GQSGSGKS. 2 N-linked (GlcNAc...) asparagine glycosylation sites follow: Asn-1217 and Asn-1256.

It belongs to the ABC transporter superfamily. ABCB family. Multidrug resistance exporter (TC 3.A.1.201) subfamily. Interacts with 1-naphthylphthalamic acid (NPA).

The protein localises to the membrane. The polypeptide is ABC transporter B family member 2 (ABCB2) (Arabidopsis thaliana (Mouse-ear cress)).